Reading from the N-terminus, the 197-residue chain is dTTP/UTP pyrophosphatase (197 aa).

Catalysis depends on aspartate 70, which acts as the Proton acceptor.

Belongs to the Maf family. YhdE subfamily. Homodimer. Can also form homotetramers. Requires a divalent metal cation as cofactor.

Its subcellular location is the cytoplasm. It carries out the reaction dTTP + H2O = dTMP + diphosphate + H(+). The catalysed reaction is UTP + H2O = UMP + diphosphate + H(+). The enzyme catalyses 5-methyl-UTP + H2O = 5-methyl-UMP + diphosphate + H(+). It catalyses the reaction psi-UTP + H2O = psi-UMP + diphosphate + H(+). It carries out the reaction 5-methyl-CTP + H2O = 5-methyl-CMP + diphosphate + H(+). Functionally, nucleoside triphosphate pyrophosphatase that hydrolyzes dTTP and UTP. Can also hydrolyze TTP and the modified nucleotides 5-methyl-UTP (m(5)UTP), pseudo-UTP and 5-methyl-CTP (m(5)CTP). Has weak activity with CTP. May have a dual role in cell division arrest and in preventing the incorporation of modified nucleotides into cellular nucleic acids. Important in maintenance of cell shape. The sequence is that of dTTP/UTP pyrophosphatase (yhdE) from Escherichia coli (strain K12).